A 648-amino-acid polypeptide reads, in one-letter code: Protein KASH5 (648 aa).

At 1–606 the chain is on the cytoplasmic side; the sequence is MHSILRSSLS…HSPGIRISQH (606 aa). Residues 206–228 are disordered; it reads PEAEESANLESFGGEDPRPEGPA. The stretch at 230–420 forms a coiled coil; the sequence is AELLSNLEDL…EEQLSQSQEG (191 aa). Positions 473-497 are enriched in acidic residues; the sequence is EVEPEPEPEPEPEPEPEPQEVEFPS. The segment at 473-545 is disordered; the sequence is EVEPEPEPEP…EESWVLADPS (73 aa). Residues 607 to 627 form a helical; Anchor for type IV membrane protein membrane-spanning segment; that stretch reads PLVPTPVLGLLLLLLLSILLF. Over 628–648 the chain is Perinuclear space; the sequence is SQSPPPTWPHLQLYYLQPPPV.

As to quaternary structure, core component the LINC complex which is composed of inner nuclear membrane SUN domain-containing proteins coupled to outer nuclear membrane KASH domain-containing nesprins. SUN and KASH domain-containing proteins seem to bind each other promiscuously; however, differentially expression of LINC complex constituents is giving rise to specific assemblies. At least SUN1/2-containing core LINC complexes are proposed to be hexameric composed of three protomers of each KASH and SUN domain-containing protein. Interacts with SUN1; this interaction mediates its telomere localization by forming a SUN1:KASH5 LINC complex. Component of a probable SUN2:KASH5 LINC complex. Self-associates. Interacts with DYNC1H1, DCTN1, DYNC1I1/2 and PAFAH1B1; suggesting the association with the dynein-dynactin motor complex. As to expression, restricted to the testis and the early ootidogenesis ovary. Expressed in spermatocytes and oocytes (at protein level).

The protein localises to the nucleus outer membrane. The protein resides in the nucleus. Its subcellular location is the chromosome. It localises to the telomere. It is found in the nucleus envelope. As a component of the LINC (LInker of Nucleoskeleton and Cytoskeleton) complex, involved in the connection between the nuclear lamina and the cytoskeleton. The nucleocytoplasmic interactions established by the LINC complex play an important role in the transmission of mechanical forces across the nuclear envelope and in nuclear movement and positioning. Required for telomere attachment to nuclear envelope in the prophase of meiosis and for rapid telomere prophase movements implicating a SUN1/2:KASH5 LINC complex in which SUN1 and SUN2 seem to act at least partial redundantly. Required for homolog pairing during meiotic prophase in spermatocytes and probably oocytes. Essential for male and female gametogenesis. Recruits cytoplasmic dynein to telomere attachment sites at the nuclear envelope in spermatocytes. In oocytes is involved in meiotic resumption and spindle formation. In Mus musculus (Mouse), this protein is Protein KASH5.